The primary structure comprises 470 residues: Sugar transporter ERD6-like 8 (470 aa).

Over residues methionine 1–glutamate 16 the composition is skewed to basic and acidic residues. The tract at residues methionine 1 to glycine 24 is disordered. 12 helical membrane passes run tryptophan 33–valine 53, glutamine 73–glycine 93, valine 110–phenylalanine 130, phenylalanine 133–isoleucine 153, threonine 164–valine 184, threonine 188–proline 208, phenylalanine 270–isoleucine 290, glycine 307–isoleucine 327, leucine 335–leucine 355, glycine 373–methionine 393, valine 409–isoleucine 429, and glycine 434–valine 454.

The protein belongs to the major facilitator superfamily. Sugar transporter (TC 2.A.1.1) family.

The protein resides in the membrane. Sugar transporter. In Arabidopsis thaliana (Mouse-ear cress), this protein is Sugar transporter ERD6-like 8.